Here is a 485-residue protein sequence, read N- to C-terminus: RAC-beta serine/threonine-protein kinase B (485 aa).

The PH domain occupies 5–109 (MVIKEGWLQK…WIIAIQTVAN (105 aa)). O-linked (GlcNAc) serine glycans are attached at residues Ser-132 and Ser-135. The Protein kinase domain occupies 156-413 (FDYLKLLGKG…AQEVMSHGFF (258 aa)). Residues 162 to 170 (LGKGTFGKV) and Lys-185 contribute to the ATP site. Catalysis depends on Asp-279, which acts as the Proton acceptor. Residue Thr-310 is glycosylated (O-linked (GlcNAc) threonine). Thr-313 carries the phosphothreonine modification. O-linked (GlcNAc) threonine glycosylation occurs at Thr-317. Residues 414-485 (ASINWQDVTE…QFSYSSSIRE (72 aa)) enclose the AGC-kinase C-terminal domain. Residues 454 to 485 (LTPPDRYDNLDALESEQRPHFPQFSYSSSIRE) are disordered. Positions 458–472 (DRYDNLDALESEQRP) are enriched in basic and acidic residues. A Phosphoserine modification is found at Ser-478. An O-linked (GlcNAc) serine; alternate glycan is attached at Ser-478.

Belongs to the protein kinase superfamily. AGC Ser/Thr protein kinase family. RAC subfamily. Post-translationally, phosphorylation on Thr-313 and Ser-478 is required for full activity. Phosphorylation of the activation loop at Thr-313 by PDPK1/PDK1 is a prerequisite for full activation. Phosphorylation by mTORC2 at Ser-478 in response to growth factors plays a key role in AKT1 activation by facilitating subsequent phosphorylation of the activation loop by PDPK1/PDK1.

The enzyme catalyses L-seryl-[protein] + ATP = O-phospho-L-seryl-[protein] + ADP + H(+). The catalysed reaction is L-threonyl-[protein] + ATP = O-phospho-L-threonyl-[protein] + ADP + H(+). Two specific sites, one in the kinase domain (Thr-313) and the other in the C-terminal regulatory region (Ser-478), need to be phosphorylated for its full activation. Its function is as follows. Akt2-b is one of several closely related serine/threonine-protein kinases known as the AKT kinase, and which regulate many processes including metabolism, proliferation, cell survival, growth and angiogenesis. This is mediated through serine and/or threonine phosphorylation of a range of downstream substrates. Over 100 substrate candidates have been reported so far, but for most of them, no isoform specificity has been reported. May be involved in the inhibition of ciliogenesis. This is RAC-beta serine/threonine-protein kinase B (akt2-b) from Xenopus laevis (African clawed frog).